Here is a 204-residue protein sequence, read N- to C-terminus: U1 small nuclear ribonucleoprotein C (204 aa).

The Matrin-type zinc-finger motif lies at 4-36; that stretch reads FFCDYCDVYLTHDSMSVRKAHNSGRNHLRNVVD. A disordered region spans residues 65–204; that stretch reads ANPMLPQNQP…GAGAPGHEKR (140 aa). Composition is skewed to pro residues over residues 77–154 and 166–192; these read GFPP…PGAP and APPP…PGFA.

It belongs to the U1 small nuclear ribonucleoprotein C family. As to quaternary structure, U1 snRNP is composed of the 7 core Sm proteins B/B', D1, D2, D3, E, F and G that assemble in a heptameric protein ring on the Sm site of the small nuclear RNA to form the core snRNP, and at least 3 U1 snRNP-specific proteins U1-70K, U1-A and U1-C. U1-C interacts with U1 snRNA and the 5' splice-site region of the pre-mRNA.

The protein resides in the nucleus. Component of the spliceosomal U1 snRNP, which is essential for recognition of the pre-mRNA 5' splice-site and the subsequent assembly of the spliceosome. U1-C is directly involved in initial 5' splice-site recognition for both constitutive and regulated alternative splicing. The interaction with the 5' splice-site seems to precede base-pairing between the pre-mRNA and the U1 snRNA. Stimulates commitment or early (E) complex formation by stabilizing the base pairing of the 5' end of the U1 snRNA and the 5' splice-site region. This is U1 small nuclear ribonucleoprotein C from Fusarium vanettenii (strain ATCC MYA-4622 / CBS 123669 / FGSC 9596 / NRRL 45880 / 77-13-4) (Fusarium solani subsp. pisi).